The following is a 420-amino-acid chain: Light-independent protochlorophyllide reductase subunit N (420 aa).

Residues cysteine 21, cysteine 46, and cysteine 103 each coordinate [4Fe-4S] cluster.

This sequence belongs to the BchN/ChlN family. In terms of assembly, protochlorophyllide reductase is composed of three subunits; BchL, BchN and BchB. Forms a heterotetramer of two BchB and two BchN subunits. [4Fe-4S] cluster is required as a cofactor.

It carries out the reaction chlorophyllide a + oxidized 2[4Fe-4S]-[ferredoxin] + 2 ADP + 2 phosphate = protochlorophyllide a + reduced 2[4Fe-4S]-[ferredoxin] + 2 ATP + 2 H2O. It participates in porphyrin-containing compound metabolism; bacteriochlorophyll biosynthesis (light-independent). In terms of biological role, component of the dark-operative protochlorophyllide reductase (DPOR) that uses Mg-ATP and reduced ferredoxin to reduce ring D of protochlorophyllide (Pchlide) to form chlorophyllide a (Chlide). This reaction is light-independent. The NB-protein (BchN-BchB) is the catalytic component of the complex. This is Light-independent protochlorophyllide reductase subunit N from Chlorobium luteolum (strain DSM 273 / BCRC 81028 / 2530) (Pelodictyon luteolum).